The following is a 47-amino-acid chain: Photosystem II reaction center protein Psb30 (47 aa).

The chain crosses the membrane as a helical span at residues valine 19–leucine 39.

This sequence belongs to the Psb30/Ycf12 family. In terms of assembly, PSII is composed of 1 copy each of membrane proteins PsbA, PsbB, PsbC, PsbD, PsbE, PsbF, PsbH, PsbI, PsbJ, PsbK, PsbL, PsbM, PsbT, PsbX, PsbY, PsbZ, Psb30/Ycf12, peripheral proteins PsbO, CyanoQ (PsbQ), PsbU, PsbV and a large number of cofactors. It forms dimeric complexes.

It localises to the cellular thylakoid membrane. Its function is as follows. A core subunit of photosystem II (PSII), probably helps stabilize the reaction center. The chain is Photosystem II reaction center protein Psb30 from Nostoc punctiforme (strain ATCC 29133 / PCC 73102).